The sequence spans 102 residues: Large ribosomal subunit protein bL21 (102 aa).

Belongs to the bacterial ribosomal protein bL21 family. As to quaternary structure, part of the 50S ribosomal subunit. Contacts protein L20.

Functionally, this protein binds to 23S rRNA in the presence of protein L20. The polypeptide is Large ribosomal subunit protein bL21 (Nitratidesulfovibrio vulgaris (strain ATCC 29579 / DSM 644 / CCUG 34227 / NCIMB 8303 / VKM B-1760 / Hildenborough) (Desulfovibrio vulgaris)).